We begin with the raw amino-acid sequence, 480 residues long: Zinc metalloproteinase/disintegrin (480 aa).

Positions 1 to 20 (MIQVLLITICLAVFPFQGSS) are cleaved as a signal peptide. A propeptide spanning residues 21-190 (IVLDSGNLNE…KASQLNVSPD (170 aa)) is cleaved from the precursor. Residues 197-391 (RFIKLAIYVD…HSPQCILNDP (195 aa)) enclose the Peptidase M12B domain. N-linked (GlcNAc...) asparagine glycans are attached at residues asparagine 259 and asparagine 279. 9 disulfide bridges follow: cysteine 308–cysteine 386, cysteine 348–cysteine 370, cysteine 350–cysteine 353, cysteine 413–cysteine 428, cysteine 415–cysteine 423, cysteine 422–cysteine 445, cysteine 436–cysteine 442, cysteine 441–cysteine 466, and cysteine 454–cysteine 473. Histidine 333 contacts Zn(2+). The active site involves glutamate 334. Histidine 337 and histidine 343 together coordinate Zn(2+). The 82-residue stretch at 399-480 (TPVSGNELLE…AGCPRNPFHA (82 aa)) folds into the Disintegrin domain. Residues 458–460 (RGD) carry the Cell attachment site motif.

Belongs to the venom metalloproteinase (M12B) family. P-II subfamily. P-IIa sub-subfamily. In terms of assembly, monomer. Requires Zn(2+) as cofactor. Expressed by the venom gland.

It localises to the secreted. In terms of biological role, impairs hemostasis in the envenomed animal. Its function is as follows. Inhibits platelet aggregation and bone resorption. The chain is Zinc metalloproteinase/disintegrin from Gloydius halys (Chinese water mocassin).